A 227-amino-acid polypeptide reads, in one-letter code: Small ribosomal subunit protein uS3 (227 aa).

In terms of domain architecture, KH type-2 spans 39-107 (VREFLMKKLE…PVHINIEEIR (69 aa)).

Belongs to the universal ribosomal protein uS3 family. As to quaternary structure, part of the 30S ribosomal subunit. Forms a tight complex with proteins S10 and S14.

Functionally, binds the lower part of the 30S subunit head. Binds mRNA in the 70S ribosome, positioning it for translation. This Hahella chejuensis (strain KCTC 2396) protein is Small ribosomal subunit protein uS3.